The sequence spans 232 residues: MKELQTVLKNHFAIEFTDKKLLETAFTHTSYANEHRLLKISHNERLEFLGDAVLQLLISEYLYKKYPKKPEGDLSKLRAMIVREESLAGFARDCQFDQFIKLGKGEEKSGGRNRDTILGDAFEAFLGALLLDKDVAKVKEFIYQVMIPKVEAGEFEMITDYKTHLQELLQVNGDVAIRYQVISETGPAHDKVFDVEVLVEGKSIGQGQGRSKKLAEQEAAKNAVEKGLDSCI.

Positions 5–134 (QTVLKNHFAI…FLGALLLDKD (130 aa)) constitute an RNase III domain. Glu47 serves as a coordination point for Mg(2+). Asp51 is a catalytic residue. Mg(2+) is bound by residues Asp120 and Glu123. Residue Glu123 is part of the active site. Residues 160–229 (DYKTHLQELL…AKNAVEKGLD (70 aa)) enclose the DRBM domain.

The protein belongs to the ribonuclease III family. As to quaternary structure, homodimer. It depends on Mg(2+) as a cofactor.

The protein localises to the cytoplasm. It catalyses the reaction Endonucleolytic cleavage to 5'-phosphomonoester.. In terms of biological role, digests double-stranded RNA. Involved in the processing of primary rRNA transcript to yield the immediate precursors to the large and small rRNAs (23S and 16S). Processes some mRNAs, and tRNAs when they are encoded in the rRNA operon. Processes pre-crRNA and tracrRNA of type II CRISPR loci if present in the organism. The sequence is that of Ribonuclease 3 from Streptococcus pneumoniae (strain CGSP14).